A 174-amino-acid chain; its full sequence is ATP-dependent protease subunit HslV (174 aa).

The active site involves threonine 2. Na(+) is bound by residues glycine 157, cysteine 160, and threonine 163.

It belongs to the peptidase T1B family. HslV subfamily. In terms of assembly, a double ring-shaped homohexamer of HslV is capped on each side by a ring-shaped HslU homohexamer. The assembly of the HslU/HslV complex is dependent on binding of ATP.

The protein resides in the cytoplasm. It carries out the reaction ATP-dependent cleavage of peptide bonds with broad specificity.. With respect to regulation, allosterically activated by HslU binding. Its function is as follows. Protease subunit of a proteasome-like degradation complex believed to be a general protein degrading machinery. This is ATP-dependent protease subunit HslV from Shewanella denitrificans (strain OS217 / ATCC BAA-1090 / DSM 15013).